A 43-amino-acid chain; its full sequence is Protein PsbN (43 aa).

Residues 7-27 (IAIFISGLLVSFTGYALYTAF) form a helical membrane-spanning segment.

It belongs to the PsbN family.

Its subcellular location is the plastid. The protein resides in the chloroplast thylakoid membrane. In terms of biological role, may play a role in photosystem I and II biogenesis. The protein is Protein PsbN of Suaeda maritima (Annual sea blite).